Reading from the N-terminus, the 157-residue chain is Crossover junction endodeoxyribonuclease RuvC (157 aa).

Residues Asp7, Glu66, and Asp139 contribute to the active site. Residues Asp7, Glu66, and Asp139 each coordinate Mg(2+).

This sequence belongs to the RuvC family. As to quaternary structure, homodimer which binds Holliday junction (HJ) DNA. The HJ becomes 2-fold symmetrical on binding to RuvC with unstacked arms; it has a different conformation from HJ DNA in complex with RuvA. In the full resolvosome a probable DNA-RuvA(4)-RuvB(12)-RuvC(2) complex forms which resolves the HJ. Requires Mg(2+) as cofactor.

The protein localises to the cytoplasm. It carries out the reaction Endonucleolytic cleavage at a junction such as a reciprocal single-stranded crossover between two homologous DNA duplexes (Holliday junction).. Its function is as follows. The RuvA-RuvB-RuvC complex processes Holliday junction (HJ) DNA during genetic recombination and DNA repair. Endonuclease that resolves HJ intermediates. Cleaves cruciform DNA by making single-stranded nicks across the HJ at symmetrical positions within the homologous arms, yielding a 5'-phosphate and a 3'-hydroxyl group; requires a central core of homology in the junction. The consensus cleavage sequence is 5'-(A/T)TT(C/G)-3'. Cleavage occurs on the 3'-side of the TT dinucleotide at the point of strand exchange. HJ branch migration catalyzed by RuvA-RuvB allows RuvC to scan DNA until it finds its consensus sequence, where it cleaves and resolves the cruciform DNA. The polypeptide is Crossover junction endodeoxyribonuclease RuvC (Helicobacter pylori (strain Shi470)).